Reading from the N-terminus, the 396-residue chain is 2-methyl-aconitate isomerase (396 aa).

Residues Ser-19 and 66–70 each bind substrate; that span reads SSTSK. Residue Cys-104 is the Proton donor/acceptor of the active site. Cys-104 carries the cysteine sulfinic acid (-SO2H) modification. The substrate site is built by Asn-106, Lys-278, Ser-309, and His-314. Met-318 functions as the Proton donor/acceptor in the catalytic mechanism. Gly-319 contributes to the substrate binding site.

The protein belongs to the PrpF family. As to quaternary structure, homodimer.

It carries out the reaction 2-methyl-trans-aconitate = 2-methyl-cis-aconitate. Its pathway is organic acid metabolism; propanoate degradation. In terms of biological role, catalyzes the isomerization of 2-methyl-trans-aconitate to yield 2-methyl-cis-aconitate through a base-catalyzed proton abstraction coupled with a rotation about C2-C3 bond of 2-methyl-aconitate. The protein is 2-methyl-aconitate isomerase of Cupriavidus necator (Alcaligenes eutrophus).